Reading from the N-terminus, the 358-residue chain is Adenosine deaminase (358 aa).

Zn(2+) is bound by residues H14 and H16. H16, D18, and G183 together coordinate substrate. H212 provides a ligand contact to Zn(2+). The active-site Proton donor is E215. Residue D294 coordinates Zn(2+). D295 lines the substrate pocket.

The protein belongs to the metallo-dependent hydrolases superfamily. Adenosine and AMP deaminases family. Zn(2+) is required as a cofactor.

The protein localises to the cell membrane. Its subcellular location is the cell junction. It is found in the cytoplasmic vesicle lumen. The protein resides in the cytoplasm. It localises to the lysosome. It carries out the reaction adenosine + H2O + H(+) = inosine + NH4(+). The catalysed reaction is 2'-deoxyadenosine + H2O + H(+) = 2'-deoxyinosine + NH4(+). Catalyzes the hydrolytic deamination of adenosine and 2-deoxyadenosine. Plays an important role in purine metabolism and in adenosine homeostasis. Modulates signaling by extracellular adenosine, and so contributes indirectly to cellular signaling events. May act as a positive regulator of T-cell coactivation. The sequence is that of Adenosine deaminase (ada) from Xenopus laevis (African clawed frog).